Here is a 459-residue protein sequence, read N- to C-terminus: MDFDTITSISTPMGEGAIGIVRLSGPQAIEIGDILYKGKKKLSEVETHTINYGHIIDPETNETVEEVMVSVLRAPKTFTREDIIEINCHGGILTINRILELTMTYGARMAEPGEYTKRAFLNGRIDLSQAEAVMDFIRSKTDRASKVAMNQIEGRLSDLIKKQRQSILEILAQVEVNIDYPEYDDVEDATTDFLLEQSKRIKEEINQLLETGAQGKIMREGLSTVIVGRPNVGKSSMLNNLIQDNKAIVTEVAGTTRDVLEEYVNVRGVPLRLVDTAGIRDTEDIVEKIGVERSRKALSEADLILFVLNNNEPLTEDDQTLFEVIKNEDVIVIINKTDLEQRLDVSELREMIGDMPLIQTSMLKQEGIDELEIQIKDLFFGGEVQNQDMTYVSNSRHISLLKQARQSIQDAIDAAESGIPMDMVQIDLTRTWEILGEIIGESASDELIDQLFSQFCLGK.

Residues Arg22, Glu85, and Arg124 each contribute to the (6S)-5-formyl-5,6,7,8-tetrahydrofolate site. The region spanning 221–380 is the TrmE-type G domain; it reads GLSTVIVGRP…LEIQIKDLFF (160 aa). Asn231 lines the K(+) pocket. Residues 231–236, 250–256, and 275–278 contribute to the GTP site; these read NVGKSS, TEVAGTT, and DTAG. Residue Ser235 coordinates Mg(2+). Residues Thr250, Val252, and Thr255 each coordinate K(+). Thr256 is a Mg(2+) binding site. Position 459 (Lys459) interacts with (6S)-5-formyl-5,6,7,8-tetrahydrofolate.

Belongs to the TRAFAC class TrmE-Era-EngA-EngB-Septin-like GTPase superfamily. TrmE GTPase family. As to quaternary structure, homodimer. Heterotetramer of two MnmE and two MnmG subunits. K(+) is required as a cofactor.

It localises to the cytoplasm. Functionally, exhibits a very high intrinsic GTPase hydrolysis rate. Involved in the addition of a carboxymethylaminomethyl (cmnm) group at the wobble position (U34) of certain tRNAs, forming tRNA-cmnm(5)s(2)U34. The sequence is that of tRNA modification GTPase MnmE from Staphylococcus epidermidis (strain ATCC 35984 / DSM 28319 / BCRC 17069 / CCUG 31568 / BM 3577 / RP62A).